The chain runs to 127 residues: MAEITKADVISFIENMTVLELAELVKELEDKFGVSAAAPVAVAAAAAPAAAAEAAEEKTEFDVILKSAGANKIGVIKVVRALTGLGLKEAKDLVDGAPKPVKNGVSKEEAEEAKKQLVESGAEVEIK.

The interval 98-127 is disordered; the sequence is PKPVKNGVSKEEAEEAKKQLVESGAEVEIK. Residues 105 to 117 show a composition bias toward basic and acidic residues; it reads VSKEEAEEAKKQL.

Belongs to the bacterial ribosomal protein bL12 family. As to quaternary structure, homodimer. Part of the ribosomal stalk of the 50S ribosomal subunit. Forms a multimeric L10(L12)X complex, where L10 forms an elongated spine to which 2 to 4 L12 dimers bind in a sequential fashion. Binds GTP-bound translation factors.

Its function is as follows. Forms part of the ribosomal stalk which helps the ribosome interact with GTP-bound translation factors. Is thus essential for accurate translation. The chain is Large ribosomal subunit protein bL12 from Geobacter sulfurreducens (strain ATCC 51573 / DSM 12127 / PCA).